The sequence spans 406 residues: 4-hydroxy-3-methylbut-2-en-1-yl diphosphate synthase (ferredoxin) (406 aa).

Residues Cys313, Cys316, Cys347, and Glu354 each contribute to the [4Fe-4S] cluster site.

Belongs to the IspG family. [4Fe-4S] cluster serves as cofactor.

It carries out the reaction (2E)-4-hydroxy-3-methylbut-2-enyl diphosphate + 2 oxidized [2Fe-2S]-[ferredoxin] + H2O = 2-C-methyl-D-erythritol 2,4-cyclic diphosphate + 2 reduced [2Fe-2S]-[ferredoxin] + H(+). Its pathway is isoprenoid biosynthesis; isopentenyl diphosphate biosynthesis via DXP pathway; isopentenyl diphosphate from 1-deoxy-D-xylulose 5-phosphate: step 5/6. Converts 2C-methyl-D-erythritol 2,4-cyclodiphosphate (ME-2,4cPP) into 1-hydroxy-2-methyl-2-(E)-butenyl 4-diphosphate. The polypeptide is 4-hydroxy-3-methylbut-2-en-1-yl diphosphate synthase (ferredoxin) (Picosynechococcus sp. (strain ATCC 27264 / PCC 7002 / PR-6) (Agmenellum quadruplicatum)).